Here is a 324-residue protein sequence, read N- to C-terminus: NADH-ubiquinone oxidoreductase chain 1 (324 aa).

Transmembrane regions (helical) follow at residues 9-29 (VLNPLAYIVPVLLAVAFLTLL), 75-95 (FLFLATPMLALTLALTLWAPM), 106-126 (LGVLFVLALSSLAVYSILGSG), 146-166 (ISYEVSLGLILLSVIIFTGGF), 177-197 (SIWLVVPAWPLAALWYISTLA), 237-257 (ILLMNTLSAILFLGATHIPAL), 259-279 (ELTAMNLMTKAALLSVVFLWV), and 299-319 (FLPMTLALVLWHLALPIALAG).

It belongs to the complex I subunit 1 family.

The protein resides in the mitochondrion inner membrane. It catalyses the reaction a ubiquinone + NADH + 5 H(+)(in) = a ubiquinol + NAD(+) + 4 H(+)(out). Its function is as follows. Core subunit of the mitochondrial membrane respiratory chain NADH dehydrogenase (Complex I) that is believed to belong to the minimal assembly required for catalysis. Complex I functions in the transfer of electrons from NADH to the respiratory chain. The immediate electron acceptor for the enzyme is believed to be ubiquinone. This chain is NADH-ubiquinone oxidoreductase chain 1 (MT-ND1), found in Thymallus arcticus (Arctic grayling).